Here is a 91-residue protein sequence, read N- to C-terminus: ATP synthase subunit c (91 aa).

2 consecutive transmembrane segments (helical) span residues 4–24 (LTMC…GTGI) and 53–73 (IGLA…LIIL).

Belongs to the ATPase C chain family. F-type ATPases have 2 components, F(1) - the catalytic core - and F(0) - the membrane proton channel. F(1) has five subunits: alpha(3), beta(3), gamma(1), delta(1), epsilon(1). F(0) has three main subunits: a(1), b(2) and c(10-14). The alpha and beta chains form an alternating ring which encloses part of the gamma chain. F(1) is attached to F(0) by a central stalk formed by the gamma and epsilon chains, while a peripheral stalk is formed by the delta and b chains.

Its subcellular location is the cell inner membrane. F(1)F(0) ATP synthase produces ATP from ADP in the presence of a proton or sodium gradient. F-type ATPases consist of two structural domains, F(1) containing the extramembraneous catalytic core and F(0) containing the membrane proton channel, linked together by a central stalk and a peripheral stalk. During catalysis, ATP synthesis in the catalytic domain of F(1) is coupled via a rotary mechanism of the central stalk subunits to proton translocation. Functionally, key component of the F(0) channel; it plays a direct role in translocation across the membrane. A homomeric c-ring of between 10-14 subunits forms the central stalk rotor element with the F(1) delta and epsilon subunits. This is ATP synthase subunit c from Geobacter metallireducens (strain ATCC 53774 / DSM 7210 / GS-15).